We begin with the raw amino-acid sequence, 1309 residues long: Angiotensin-converting enzyme (1309 aa).

An N-terminal signal peptide occupies residues 1–33 (MGAASGCRWPWPPLLPLLLMLLLPPPPLPVALA). At 34 to 1259 (LDSALQPGNF…GLNLEEQQAR (1226 aa)) the chain is on the extracellular side. Asparagine 42, asparagine 58, asparagine 78, asparagine 115, asparagine 135, asparagine 150, and asparagine 164 each carry an N-linked (GlcNAc...) asparagine glycan. Peptidase M2 domains lie at 44–627 (TADE…LGWP) and 646–1225 (VSDE…LGWP). Cysteine 161 and cysteine 169 are joined by a disulfide. Tyrosine 235 contributes to the chloride binding site. Asparagine 322 is a glycosylation site (N-linked (GlcNAc...) asparagine). Cysteine 363 and cysteine 381 form a disulfide bridge. Histidine 394 is a binding site for Zn(2+). Glutamate 395 functions as the Proton acceptor 1 in the catalytic mechanism. Residues histidine 398 and glutamate 422 each contribute to the Zn(2+) site. A glycan (N-linked (GlcNAc...) asparagine) is linked at asparagine 512. The Proton donor 1 role is filled by histidine 523. The N-linked (GlcNAc...) asparagine glycan is linked to asparagine 526. Position 532 (arginine 532) interacts with chloride. The cysteines at positions 548 and 560 are disulfide-linked. 4 N-linked (GlcNAc...) asparagine glycosylation sites follow: asparagine 680, asparagine 698, asparagine 717, and asparagine 763. A disulfide bond links cysteine 760 and cysteine 766. The chloride site is built by arginine 794 and tyrosine 832. N-linked (GlcNAc...) asparagine glycosylation occurs at asparagine 945. Cysteine 960 and cysteine 978 are oxidised to a cystine. Histidine 991 contacts Zn(2+). Glutamate 992 serves as the catalytic Proton acceptor 2. The Zn(2+) site is built by histidine 995 and glutamate 1019. Positions 1093 and 1097 each coordinate chloride. Histidine 1121 serves as the catalytic Proton donor 2. Arginine 1130 serves as a coordination point for chloride. Cysteines 1146 and 1158 form a disulfide. N-linked (GlcNAc...) asparagine glycosylation is found at asparagine 1194 and asparagine 1228. Residues 1218–1259 (HGEKLGWPQYNWTPNSARLEGSFAGTGRVNFLGLNLEEQQAR) form a juxtamembrane stalk region. The helical transmembrane segment at 1260–1280 (VGQWVLLFLGVTLLVATMGLT) threads the bilayer. The Cytoplasmic segment spans residues 1281-1309 (QRLFSIRHQILRRTHRGPQFGSEVELRHS). Serine 1302 bears the Phosphoserine mark.

Belongs to the peptidase M2 family. As to quaternary structure, monomer and homodimer; homodimerizes following binding to an inhibitor. Interacts with calmodulin (CALM1, CALM2 or CALM3); interaction takes place in the cytoplasmic region and regulates phosphorylation and proteolytic cleavage. Requires Zn(2+) as cofactor. The cofactor is chloride. Produced following proteolytic cleavage by secretase enzymes that cleave the transmembrane form in the juxtamembrane stalk region upstream of the transmembrane region. Cleavage can take place at different sites of the juxtamembrane stalk region. In terms of processing, phosphorylated by CK2 on Ser-1302; which allows membrane retention. Phosphorylated on tyrosine residues on its extracellular part, promoting cleavage by secretase enzymes and formation of the soluble form (Angiotensin-converting enzyme, soluble form).

The protein resides in the cell membrane. It is found in the cytoplasm. Its subcellular location is the secreted. It catalyses the reaction Release of a C-terminal dipeptide, oligopeptide-|-Xaa-Yaa, when Xaa is not Pro, and Yaa is neither Asp nor Glu. Thus, conversion of angiotensin I to angiotensin II, with increase in vasoconstrictor activity, but no action on angiotensin II.. The catalysed reaction is angiotensin I + H2O = L-histidyl-L-leucine + angiotensin II. The enzyme catalyses bradykinin + H2O = L-Phe-L-Arg + bradykinin(1-7). It carries out the reaction substance P + H2O = substance P(1-9) + L-Leu-L-Met-NH2. It catalyses the reaction substance P + H2O = substance P(1-8) + Gly-L-Leu-L-Met-NH2. The catalysed reaction is substance P + H2O = L-Phe-L-Phe-Gly-L-Leu-L-Met-NH2 + substance P(1-6). The enzyme catalyses neurotensin + H2O = neurotensin(1-11) + L-isoleucyl-L-leucine. It carries out the reaction goralatide + H2O = N-acetyl-L-seryl-L-aspartate + L-lysyl-L-proline. It catalyses the reaction Met-enkephalin + H2O = L-phenylalanyl-L-methionine + L-tyrosylglycylglycine. The catalysed reaction is Leu-enkephalin + H2O = L-tyrosylglycylglycine + L-phenylalanyl-L-leucine. The enzyme catalyses Met-enkephalin-Arg-Phe + H2O = L-arginyl-L-phenylalanine + Met-enkephalin. The dipeptidyl carboxypeptidase activity is strongly activated by chloride. The dipeptidyl carboxypeptidase activity is specifically inhibited by lisinopril, captopril and enalaprilat. Dipeptidyl carboxypeptidase that removes dipeptides from the C-terminus of a variety of circulating hormones, such as angiotensin I, bradykinin or enkephalins, thereby playing a key role in the regulation of blood pressure, electrolyte homeostasis or synaptic plasticity. Composed of two similar catalytic domains, each possessing a functional active site, with different selectivity for substrates. Plays a major role in the angiotensin-renin system that regulates blood pressure and sodium retention by the kidney by converting angiotensin I to angiotensin II, resulting in an increase of the vasoconstrictor activity of angiotensin. Also able to inactivate bradykinin, a potent vasodilator, and therefore enhance the blood pressure response. Acts as a regulator of synaptic transmission by mediating cleavage of neuropeptide hormones, such as substance P, neurotensin or enkephalins. Catalyzes degradation of different enkephalin neuropeptides (Met-enkephalin, Leu-enkephalin, Met-enkephalin-Arg-Phe and possibly Met-enkephalin-Arg-Gly-Leu). Acts as a regulator of synaptic plasticity in the nucleus accumbens of the brain by mediating cleavage of Met-enkephalin-Arg-Phe, a strong ligand of Mu-type opioid receptor OPRM1, into Met-enkephalin. Met-enkephalin-Arg-Phe cleavage by ACE decreases activation of OPRM1, leading to long-term synaptic potentiation of glutamate release. Also acts as a regulator of hematopoietic stem cell differentiation by mediating degradation of hemoregulatory peptide N-acetyl-SDKP (AcSDKP). Acts as a regulator of cannabinoid signaling pathway by mediating degradation of hemopressin, an antagonist peptide of the cannabinoid receptor CNR1. Involved in amyloid-beta metabolism by catalyzing degradation of Amyloid-beta protein 40 and Amyloid-beta protein 42 peptides, thereby preventing plaque formation. Catalyzes cleavage of cholecystokinin (maturation of Cholecystokinin-8 and Cholecystokinin-5) and Gonadoliberin-1 (both maturation and degradation) hormones. Degradation of hemoregulatory peptide N-acetyl-SDKP (AcSDKP) and amyloid-beta proteins is mediated by the N-terminal catalytic domain, while angiotensin I and cholecystokinin cleavage is mediated by the C-terminal catalytic region. Its function is as follows. Soluble form that is released in blood plasma and other body fluids following proteolytic cleavage in the juxtamembrane stalk region. This chain is Angiotensin-converting enzyme, found in Sus scrofa (Pig).